Reading from the N-terminus, the 105-residue chain is MICKDGFLINEENGEVIDYCYENNEMVQDKELEHYSVTPPVPYVPEKYKEKMKEYNKWLKGKEAFIQLKMKAVKKIEYLKNLCANEETQINKRTRKSRRLLTPKT.

This is an uncharacterized protein from Acidianus bottle-shaped virus (isolate Italy/Pozzuoli) (ABV).